A 162-amino-acid polypeptide reads, in one-letter code: Small ribosomal subunit protein uS5 (162 aa).

Positions 11–74 (LTDRVVHISR…EQAKKNLIKV (64 aa)) constitute an S5 DRBM domain.

The protein belongs to the universal ribosomal protein uS5 family. As to quaternary structure, part of the 30S ribosomal subunit. Contacts proteins S4 and S8.

Functionally, with S4 and S12 plays an important role in translational accuracy. In terms of biological role, located at the back of the 30S subunit body where it stabilizes the conformation of the head with respect to the body. In Pelobacter propionicus (strain DSM 2379 / NBRC 103807 / OttBd1), this protein is Small ribosomal subunit protein uS5.